We begin with the raw amino-acid sequence, 86 residues long: Molybdopterin synthase sulfur carrier subunit (86 aa).

Glycine 86 bears the 1-thioglycine; alternate mark. Glycine 86 is modified (glycyl adenylate; alternate).

It belongs to the MoaD family. MOCS2A subfamily. In terms of assembly, heterotetramer; composed of 2 small (mocs2s) and 2 large (mocs2l) subunits. C-terminal thiocarboxylation occurs in 2 steps, it is first acyl-adenylated (-COAMP) via the hesA/moeB/thiF part of mocs3, then thiocarboxylated (-COSH) via the rhodanese domain of mocs3.

Its subcellular location is the cytoplasm. Its pathway is cofactor biosynthesis; molybdopterin biosynthesis. In terms of biological role, acts as a sulfur carrier required for molybdopterin biosynthesis. Component of the molybdopterin synthase complex that catalyzes the conversion of precursor Z into molybdopterin by mediating the incorporation of 2 sulfur atoms into precursor Z to generate a dithiolene group. In the complex, serves as sulfur donor by being thiocarboxylated (-COSH) at its C-terminus by mocs3. After interaction with mocs2l, the sulfur is then transferred to precursor Z to form molybdopterin. This Dictyostelium discoideum (Social amoeba) protein is Molybdopterin synthase sulfur carrier subunit (mocs2s).